The chain runs to 97 residues: DNA replication protein 1 (97 aa).

A coiled-coil region spans residues 49 to 78; it reads IELEKKMTKLEHENKLMKNALYELSRMENN.

This sequence belongs to the phi29likevirus DNA replication protein 1 family. As to quaternary structure, homomultimer. Self-associates into large complexes forming long filamentous structures. Interacts (via N-terminus) with the primer terminal protein.

The protein localises to the host membrane. In terms of biological role, protein that assembles into highly ordered structures and provides a specific site for viral DNA replication. Probably anchors the viral DNA replisome to the host membrane. In Bacillus subtilis (Bacteriophage PZA), this protein is DNA replication protein 1 (1C).